Reading from the N-terminus, the 219-residue chain is UPF0502 protein Gmet_0262 (219 aa).

The protein belongs to the UPF0502 family.

This chain is UPF0502 protein Gmet_0262, found in Geobacter metallireducens (strain ATCC 53774 / DSM 7210 / GS-15).